Reading from the N-terminus, the 134-residue chain is Nif-regulating protein A (134 aa).

The C4-type; atypical zinc finger occupies 3 to 36 (CLECGLVYIVSGLKVPEKISVRVFVNRIEHPFTH).

In terms of assembly, interacts with the general archaeal transcription factors TBPs.

Functionally, involved in nitrogen regulation. Enhances the transcription of the nitrogen fixation (nif) operon under nitrogen-limited conditions. Acts by binding to the nifH promoter region. This Methanosarcina mazei (strain ATCC BAA-159 / DSM 3647 / Goe1 / Go1 / JCM 11833 / OCM 88) (Methanosarcina frisia) protein is Nif-regulating protein A.